The sequence spans 174 residues: Large ribosomal subunit protein uL18 (174 aa).

Belongs to the universal ribosomal protein uL18 family. As to quaternary structure, part of the 50S ribosomal subunit. Contacts the 5S and 23S rRNAs.

Its function is as follows. This is one of the proteins that bind and probably mediate the attachment of the 5S RNA into the large ribosomal subunit, where it forms part of the central protuberance. This is Large ribosomal subunit protein uL18 from Methanoregula boonei (strain DSM 21154 / JCM 14090 / 6A8).